The following is a 337-amino-acid chain: Tryptophan--tRNA ligase (337 aa).

ATP is bound by residues 12–14 (QPS) and 21–22 (GN). The 'HIGH' region signature appears at 13–22 (PSADSLHLGN). Residue Asp-138 participates in L-tryptophan binding. ATP is bound by residues 150–152 (GDD), Ile-189, and 198–202 (KMSKS). Residues 198-202 (KMSKS) carry the 'KMSKS' region motif.

The protein belongs to the class-I aminoacyl-tRNA synthetase family. Homodimer.

Its subcellular location is the cytoplasm. The enzyme catalyses tRNA(Trp) + L-tryptophan + ATP = L-tryptophyl-tRNA(Trp) + AMP + diphosphate + H(+). Its function is as follows. Catalyzes the attachment of tryptophan to tRNA(Trp). This is Tryptophan--tRNA ligase from Leifsonia xyli subsp. xyli (strain CTCB07).